A 400-amino-acid polypeptide reads, in one-letter code: Keratin, type I cytoskeletal 19 (400 aa).

The head stretch occupies residues methionine 1–asparagine 79. Omega-N-methylarginine is present on arginine 7. Phosphoserine occurs at positions 14 and 22. Position 24 is an asymmetric dimethylarginine; alternate (arginine 24). Arginine 24 bears the Omega-N-methylarginine; alternate mark. Arginine 32 is modified (omega-N-methylarginine). A phosphoserine mark is found at serine 35 and serine 40. Arginine 43 and arginine 51 each carry omega-N-methylarginine. A phosphoserine mark is found at serine 57 and serine 72. The coil 1A stretch occupies residues glutamate 80–tryptophan 115. Residues glutamate 80–tyrosine 391 form the IF rod domain. The segment at tyrosine 116–threonine 133 is linker 1. The interval isoleucine 134 to leucine 225 is coil 1B. Residues arginine 226 to isoleucine 248 are linker 12. The interval aspartate 244–histidine 390 is necessary for interaction with PNN. A coil 2 region spans residues leucine 249 to glutamine 387. At threonine 323 the chain carries Phosphothreonine. The tract at residues glutamate 388–leucine 400 is rod-like helical tail. Tyrosine 391 is modified (phosphotyrosine). Serine 395 carries the post-translational modification Phosphoserine.

It belongs to the intermediate filament family. As to quaternary structure, heterotetramer of two type I and two type II keratins. Interacts with PNN and the actin-binding domain of DMD.

Functionally, involved in the organization of myofibers. Together with KRT8, helps to link the contractile apparatus to dystrophin at the costameres of striated muscle. In Pongo abelii (Sumatran orangutan), this protein is Keratin, type I cytoskeletal 19.